The primary structure comprises 284 residues: 3-oxoadipate:acetyl-CoA acetyltransferase (284 aa).

The Zn(2+) site is built by H47, H49, and E229.

The protein belongs to the BKACE family. It depends on Zn(2+) as a cofactor.

It catalyses the reaction 3-oxoadipate + acetyl-CoA = acetoacetate + succinyl-CoA. Its function is as follows. Catalyzes the condensation of 3-oxoadipate (beta-ketoadipate) and acetyl-CoA, forming acetoacetate and succinyl-CoA. Is likely involved is the degradation of 3-oxoadipate through an alternative pathway, within catechol degradation. This Cupriavidus necator (strain ATCC 17699 / DSM 428 / KCTC 22496 / NCIMB 10442 / H16 / Stanier 337) (Ralstonia eutropha) protein is 3-oxoadipate:acetyl-CoA acetyltransferase.